Consider the following 78-residue polypeptide: Surfactant-associated protein 2 (78 aa).

An N-terminal signal peptide occupies residues 1–19; that stretch reads MGAGLPLVLLLTLVGSSQG. An N-linked (GlcNAc...) asparagine glycan is attached at Asn37.

In terms of processing, N-glycosylated.

The protein localises to the secreted. It localises to the cytoplasmic vesicle. It is found in the secretory vesicle. Its subcellular location is the golgi apparatus. Its function is as follows. Putative surfactant protein. This is Surfactant-associated protein 2 (SFTA2) from Bos taurus (Bovine).